Consider the following 145-residue polypeptide: Protein AggB (145 aa).

An N-terminal signal peptide occupies residues 1 to 24 (MLKKSILPMSCGVLVMVMSGLLDA).

It to E.coli AfaD.

The chain is Protein AggB (aggB) from Escherichia coli.